Consider the following 302-residue polypeptide: Porphobilinogen deaminase (302 aa).

Position 234 is an S-(dipyrrolylmethanemethyl)cysteine (Cys-234).

It belongs to the HMBS family. As to quaternary structure, monomer. Dipyrromethane is required as a cofactor.

It catalyses the reaction 4 porphobilinogen + H2O = hydroxymethylbilane + 4 NH4(+). It functions in the pathway porphyrin-containing compound metabolism; protoporphyrin-IX biosynthesis; coproporphyrinogen-III from 5-aminolevulinate: step 2/4. Tetrapolymerization of the monopyrrole PBG into the hydroxymethylbilane pre-uroporphyrinogen in several discrete steps. The polypeptide is Porphobilinogen deaminase (Corynebacterium glutamicum (strain R)).